A 297-amino-acid chain; its full sequence is MDLSKLTTEARNKRTMNLDRMTIHEFATIMNQEDQSVPLSVANSLATIENAIDSITKHFKQGGRLFYIGAGTSGRLGVLDAVECVPTFGIEAEMVRGLIAGGPSAMTLAVEGAEDDDKLASSDLKKRALTAADVVVGIAASGRTPYVIGGLDYADSLGAATISLACNQNSEISKHAQIAIEVPVGPEILTGSTRLKAGTAQKLVLNMLSTGAMVGIGKVYKNLMVDVRPTNEKLLIRSKRIICQATNCDEATAAEVFEKADRNVKLAIVMILTNLPKKEANEQLRKADGFISKTIPE.

The SIS domain maps to 55-218 (ITKHFKQGGR…STGAMVGIGK (164 aa)). Residue glutamate 83 is the Proton donor of the active site. The active site involves glutamate 114.

Belongs to the GCKR-like family. MurNAc-6-P etherase subfamily. As to quaternary structure, homodimer.

It carries out the reaction N-acetyl-D-muramate 6-phosphate + H2O = N-acetyl-D-glucosamine 6-phosphate + (R)-lactate. Its pathway is amino-sugar metabolism; N-acetylmuramate degradation. In terms of biological role, specifically catalyzes the cleavage of the D-lactyl ether substituent of MurNAc 6-phosphate, producing GlcNAc 6-phosphate and D-lactate. This chain is N-acetylmuramic acid 6-phosphate etherase, found in Oenococcus oeni (strain ATCC BAA-331 / PSU-1).